Here is a 395-residue protein sequence, read N- to C-terminus: RNA polymerase II elongation factor ELL3 (395 aa).

Disordered stretches follow at residues 124–149, 163–182, 194–218, and 233–279; these read SSLQRHNRTEDARDRESWQNVGDYPE, VPDPLASSQGQSLPGSSREH, LPNRDPDQALPPSASQKHVDKKRPA, and LAPS…SLSP. The span at 130-140 shows a compositional bias: basic and acidic residues; that stretch reads NRTEDARDRES. A compositionally biased stretch (polar residues) spans 168–177; that stretch reads ASSQGQSLPG. Positions 246–258 are enriched in acidic residues; it reads LQEEDWEQEDKDE. The span at 268-277 shows a compositional bias: polar residues; it reads PSVQADSESL. The 111-residue stretch at 283–393 folds into the OCEL domain; sequence PDYLLQYRAI…LILEFEEKNR (111 aa).

Belongs to the ELL/occludin family. In terms of assembly, interacts with AFF4. Component of the super elongation complex (SEC), at least composed of EAF1, EAF2, CDK9, MLLT3/AF9, AFF (AFF1 or AFF4), the P-TEFb complex and ELL (ELL, ELL2 or ELL3). Component of the little elongation complex (LEC), at least composed of ELL (ELL, ELL2 or ELL3), ZC3H8, ICE1 and ICE2.

Its subcellular location is the nucleus. In terms of biological role, enhancer-binding elongation factor that specifically binds enhancers in embryonic stem cells (ES cells), marks them, and is required for their future activation during stem cell specification. Elongation factor component of the super elongation complex (SEC), a complex required to increase the catalytic rate of RNA polymerase II transcription by suppressing transient pausing by the polymerase at multiple sites along the DNA. Component of the little elongation complex (LEC), a complex required to regulate small nuclear RNA (snRNA) gene transcription by RNA polymerase II and III. Does not only bind to enhancer regions of active genes, but also marks the enhancers that are in a poised or inactive state in ES cells and is required for establishing proper RNA polymerase II occupancy at developmentally regulated genes in a cohesin-dependent manner. Probably required for priming developmentally regulated genes for later recruitment of the super elongation complex (SEC), for transcriptional activation during differentiation. Required for recruitment of P-TEFb within SEC during differentiation. Probably preloaded on germ cell chromatin, suggesting that it may prime gene activation by marking enhancers as early as in the germ cells. Promoting epithelial-mesenchymal transition (EMT). This is RNA polymerase II elongation factor ELL3 (ELL3) from Bos taurus (Bovine).